A 432-amino-acid polypeptide reads, in one-letter code: Adenylosuccinate synthetase (432 aa).

GTP-binding positions include 11–17 (GDEGKGK) and 39–41 (GHT). Catalysis depends on Asp12, which acts as the Proton acceptor. Mg(2+)-binding residues include Asp12 and Gly39. Residues 12 to 15 (DEGK), 37 to 40 (NAGH), Thr134, Arg148, Asn230, Thr245, and Arg309 each bind IMP. The Proton donor role is filled by His40. Substrate is bound at residue 305–311 (VTTGRKR). Residues Arg311, 337–339 (KLD), and 419–421 (GTG) contribute to the GTP site.

Belongs to the adenylosuccinate synthetase family. In terms of assembly, homodimer. The cofactor is Mg(2+).

The protein localises to the cytoplasm. It catalyses the reaction IMP + L-aspartate + GTP = N(6)-(1,2-dicarboxyethyl)-AMP + GDP + phosphate + 2 H(+). The protein operates within purine metabolism; AMP biosynthesis via de novo pathway; AMP from IMP: step 1/2. In terms of biological role, plays an important role in the de novo pathway and in the salvage pathway of purine nucleotide biosynthesis. Catalyzes the first committed step in the biosynthesis of AMP from IMP. This is Adenylosuccinate synthetase from Candida glabrata (strain ATCC 2001 / BCRC 20586 / JCM 3761 / NBRC 0622 / NRRL Y-65 / CBS 138) (Yeast).